The primary structure comprises 365 residues: MSGNSFGKLFTVTTFGESHGIAIGGVVDGCPPGLEITEEDLQVDLDRRKPGTSRYTTARREDDEVQILSGVFEGKTTGTSIGLLIKNKDQRSQDYGNIKDRFRPGHADYTYDQKYGSRDYRGGGRSSARETAIRVAAGGIAKKYLKEVHGIEVLGYLSQLGPVTVDKVDHSVTNTNPFFCPDESKLDALDEYMRDLKKSGDSIGAKVSVVAKNVPVGLGEPVFDRLDAEIAHAMMGINAVKGVEIGDGFDVINQKGSEHRDTLTPEGFSSNHAGGVLGGISTGQDIEVHMALKPTSSISVPGKTINKDNEEIDIVTKGRHDPCVGIRAVPIAEAMLALVLMDHLLRHRAQNTGVLSTTKPIAGQA.

Residues Arg-48 and Arg-54 each coordinate NADP(+). FMN-binding positions include 125 to 127 (RSS), 238 to 239 (NA), Gly-278, 293 to 297 (KPTSS), and Arg-319.

Belongs to the chorismate synthase family. Homotetramer. The cofactor is FMNH2.

It catalyses the reaction 5-O-(1-carboxyvinyl)-3-phosphoshikimate = chorismate + phosphate. It functions in the pathway metabolic intermediate biosynthesis; chorismate biosynthesis; chorismate from D-erythrose 4-phosphate and phosphoenolpyruvate: step 7/7. Catalyzes the anti-1,4-elimination of the C-3 phosphate and the C-6 proR hydrogen from 5-enolpyruvylshikimate-3-phosphate (EPSP) to yield chorismate, which is the branch point compound that serves as the starting substrate for the three terminal pathways of aromatic amino acid biosynthesis. This reaction introduces a second double bond into the aromatic ring system. This Alteromonas mediterranea (strain DSM 17117 / CIP 110805 / LMG 28347 / Deep ecotype) protein is Chorismate synthase.